A 265-amino-acid chain; its full sequence is MNNLYRDLAPVTEAAWGEIELEASRTFKRHVAGRRVVDVSEPGGPAAAAVSTGRLIDVEAPTNGVVAHLRASKPLVRLRVPFTLSRYEIDNVERGANDSDWDPVKEAAKKLAFVEDRAIFEGYAAASIDGIRSASSNKPLALPADPREIPDVITQAISELRLAGVDGPYSVLLSADVYTKVSETTEHGYPILEHIDRLVPGDIIWAPAIDGAFVLTTRGGDFDLQLGTDVSIGYTSHDADTVQLYLQETLTFLCYTAEAAVPLTS.

Belongs to the encapsulin family. Family 1 subfamily. Found in a complex with DyP, suggesting it is the native cargo protein. Monomers form pentamers, which assemble to form hollow shells composed of 60 subunits with several openings.

It is found in the encapsulin nanocompartment. Its subcellular location is the cell membrane. Functionally, shell component of a type 1 encapsulin nanocompartment. Assembles into proteinaceous shells 23-24 nm in diameter with 2-2.5 nm thick walls. Cargo protein DyP is targeted to the interior via its C-terminal extension; probably only 1 DyP hexamer is incorporated into each shell. Probably involved in protection against oxidative damage. This chain is Type 1 encapsulin shell protein, found in Mycolicibacterium paratuberculosis (strain ATCC BAA-968 / K-10) (Mycobacterium paratuberculosis).